Here is a 344-residue protein sequence, read N- to C-terminus: Anthranilate phosphoribosyltransferase (344 aa).

5-phospho-alpha-D-ribose 1-diphosphate contacts are provided by residues Gly86, 89-90 (GD), Thr94, 96-99 (NIST), 114-122 (KHGNKSASG), and Ser126. Gly86 contributes to the anthranilate binding site. Ser98 is a binding site for Mg(2+). Asn117 serves as a coordination point for anthranilate. Anthranilate is bound at residue Arg172. Residues Asp231 and Glu232 each contribute to the Mg(2+) site.

It belongs to the anthranilate phosphoribosyltransferase family. In terms of assembly, homodimer. It depends on Mg(2+) as a cofactor.

It carries out the reaction N-(5-phospho-beta-D-ribosyl)anthranilate + diphosphate = 5-phospho-alpha-D-ribose 1-diphosphate + anthranilate. It participates in amino-acid biosynthesis; L-tryptophan biosynthesis; L-tryptophan from chorismate: step 2/5. Functionally, catalyzes the transfer of the phosphoribosyl group of 5-phosphorylribose-1-pyrophosphate (PRPP) to anthranilate to yield N-(5'-phosphoribosyl)-anthranilate (PRA). This Prochlorococcus marinus (strain AS9601) protein is Anthranilate phosphoribosyltransferase.